The following is a 262-amino-acid chain: MKTPFGKSPAQRSRADAGHTRVSASMMKKRTSHKKHRNNVGPSKPISQPRRNIVGCRIQHGWKEGSGPITQWKGTVLDQVPVNPSLYLIKYDGFDCVYGLELHKDERVSALEVLPDRVASSRISDAHLADTMIGKAVEHMFETEDGSKDEWRGMVLARAPIMNTWFYITYEKDPVLYMYQLLDDYKEGDLRIMPDSNDSPPAEREPGEVVDSLVGKQVEYAKEDGSKRTGMVIHQVEAKPSVYFIKFDDDFHIYVYDLVKTS.

The tract at residues 1 to 49 is disordered; it reads MKTPFGKSPAQRSRADAGHTRVSASMMKKRTSHKKHRNNVGPSKPISQP. Positions 27–38 are enriched in basic residues; that stretch reads MKKRTSHKKHRN.

It belongs to the SPIN/STSY family. As to expression, expressed predominantly in ovarian granulosa and thecal cell.

The protein resides in the nucleus. Its function is as follows. May play a role in mitosis. In Gallus gallus (Chicken), this protein is Spindlin-W (SPINW).